The following is a 252-amino-acid chain: Acetoacetate decarboxylase (252 aa).

Lys116 (schiff-base intermediate with acetoacetate) is an active-site residue.

It belongs to the ADC family.

It carries out the reaction acetoacetate + H(+) = acetone + CO2. Functionally, catalyzes the conversion of acetoacetate to acetone and carbon dioxide. The protein is Acetoacetate decarboxylase of Paraburkholderia phytofirmans (strain DSM 17436 / LMG 22146 / PsJN) (Burkholderia phytofirmans).